Here is a 482-residue protein sequence, read N- to C-terminus: Proline--tRNA ligase (482 aa).

This sequence belongs to the class-II aminoacyl-tRNA synthetase family. ProS type 3 subfamily. As to quaternary structure, homodimer.

The protein localises to the cytoplasm. The catalysed reaction is tRNA(Pro) + L-proline + ATP = L-prolyl-tRNA(Pro) + AMP + diphosphate. Functionally, catalyzes the attachment of proline to tRNA(Pro) in a two-step reaction: proline is first activated by ATP to form Pro-AMP and then transferred to the acceptor end of tRNA(Pro). This Thermofilum pendens (strain DSM 2475 / Hrk 5) protein is Proline--tRNA ligase.